The primary structure comprises 174 residues: CASP-like protein 4D2 (174 aa).

At 1 to 14 the chain is on the cytoplasmic side; sequence MAPPPPSPPAVSLK. Residues 15 to 35 form a helical membrane-spanning segment; the sequence is VLLLLLRVLTGVFLVIALIIL. Over 36–60 the chain is Extracellular; it reads STNSVTIVSQGSALKFHFKDVYAYR. The chain crosses the membrane as a helical span at residues 61-81; it reads YMLSAAVIGLVYAVIQLFFTI. The Cytoplasmic portion of the chain corresponds to 82–97; that stretch reads SEFATGVKNPFNYQLD. The chain crosses the membrane as a helical span at residues 98-118; sequence FYGDKLISYLVATGSAAGFGV. The Extracellular segment spans residues 119–150; the sequence is TKDLKDTFLALVALDSTDPVDKFFSKGYASAS. A helical membrane pass occupies residues 151–171; sequence LLLFAFICLAVLSVFSSFAMA. At 172 to 174 the chain is on the cytoplasmic side; sequence KRN.

The protein belongs to the Casparian strip membrane proteins (CASP) family. In terms of assembly, homodimer and heterodimers.

It is found in the cell membrane. The polypeptide is CASP-like protein 4D2 (Arabidopsis thaliana (Mouse-ear cress)).